The sequence spans 555 residues: Potassium-transporting ATPase potassium-binding subunit (555 aa).

A run of 10 helical transmembrane segments spans residues 2–22, 60–80, 130–150, 173–193, 246–266, 278–298, 374–394, 412–432, 483–503, and 525–545; these read IWVAVVITMLLFILVAKPTGI, QYALSLVLLNGFMIVVVYFIF, IGITFLMFAAPATTLALVMAF, VFLPIAFMAALVFVALGVPQT, MSNILQMMLMMLLPTALPFTY, ILFVSLFMVFLLGFITITTSE, AGFVNIIMYAIIAVFISGLMV, LIAVTILFHPLLILGFSALAL, LVMFLGRYFSLITMLAVAASL, and GIFIGTIVIVGALTFFPMLVL.

The protein belongs to the KdpA family. The system is composed of three essential subunits: KdpA, KdpB and KdpC.

It localises to the cell membrane. In terms of biological role, part of the high-affinity ATP-driven potassium transport (or Kdp) system, which catalyzes the hydrolysis of ATP coupled with the electrogenic transport of potassium into the cytoplasm. This subunit binds the extracellular potassium ions and delivers the ions to the membrane domain of KdpB through an intramembrane tunnel. The sequence is that of Potassium-transporting ATPase potassium-binding subunit from Bacillus thuringiensis (strain Al Hakam).